Here is a 902-residue protein sequence, read N- to C-terminus: Desmocollin-2 (902 aa).

An N-terminal signal peptide occupies residues 1 to 27 (MAAVGSMRSGSPAFGLGHLLTLAILAL). The propeptide occupies 28–135 (ASDACKEVVL…TEKVLSRAKR (108 aa)). Cadherin domains follow at residues 136–243 (RWAP…YPIF), 244–355 (TQKL…LPTF), 356–471 (TRTT…GPEC), 472–579 (IPPM…FIPK), and 580–694 (QTVV…RLGP). Topologically, residues 136 to 694 (RWAPIPCSML…TGYADVRLGP (559 aa)) are extracellular. Asparagine 166 carries an N-linked (GlcNAc...) asparagine glycan. Asparagine 392, asparagine 546, and asparagine 629 each carry an N-linked (GlcNAc...) asparagine glycan. Residues 695 to 715 (WAILAILLGIALLFCILFTLV) form a helical membrane-spanning segment. Over 716 to 902 (CSVSRASKQQ…RTLAEVCAKR (187 aa)) the chain is Cytoplasmic. 3 positions are modified to phosphoserine: serine 865, serine 869, and serine 874.

Interacts with DSP, PKP2 and JUP. Interacts with DSG3; the interaction may limit the interaction of DSC3 with p38MAPK family members and therefore repress p38MAPK signaling activation. As to expression, expressed in intestinal epithelial cells (at protein level). Expressed in the heart. Expressed in tongue, bladder, stomach, liver, kidney, and lung.

It localises to the cell membrane. The protein localises to the cell junction. Its subcellular location is the desmosome. Its function is as follows. A component of desmosome cell-cell junctions which are required for positive regulation of cellular adhesion. Promotes timely incorporation of DSG2 into desmosome intercellular junctions and promotes interaction of desmosome cell junctions with intermediate filament cytokeratin, via modulation of DSP phosphorylation. Plays an important role in desmosome-mediated maintenance of intestinal epithelial cell intercellular adhesion strength and barrier function. Positively regulates wound healing of intestinal mucosa via promotion of epithelial cell migration, and also plays a role in mechanotransduction of force between intestinal epithelial cells and extracellular matrix. May contribute to epidermal cell positioning (stratification) by mediating differential adhesiveness between cells that express different isoforms. May promote p38MAPK signaling activation that facilitates keratinocyte migration. In Mus musculus (Mouse), this protein is Desmocollin-2 (Dsc2).